We begin with the raw amino-acid sequence, 395 residues long: MFPVSSIGNDISSDLVRRKMNDLPESPTGNNLEALAPGIEKLKQTSIEMVTLLNTLQPGGKCIITGDFQKELAYLQNVILYNVSSLRLDFLGYNAQIIQRSDNTCELTINEPLKNQEISTGNININCPLKDIYNEIRRLNVIFSCGTGDIVDLSSLDLRNVDLDYYDFTDKHMANTILNPFKLNSTNFTNANMFQVNFVSSTQNATISWDYLLKITPVLISISDMYSEEKIKFVESCLNEPGDITEEQLKIMRFAIIKSIPRATLTDKLENELTKEIYKSSSKIINCLNRIKLTEMKEFSSEKIYDYIDIIIEDYENTKENAYLVVPQINYTMDLNIEDSSSEELLSDNTLEKDENSPDNGFEVGEYNTYEAYNSEKQYFTREDYTYDYDLLNAI.

This is an uncharacterized protein from Escherichia coli (strain K12).